The primary structure comprises 570 residues: Probable metalloreductase AIM14 (570 aa).

Helical transmembrane passes span 21 to 41 (IKYG…LALL), 70 to 90 (AIHL…HYSL), 101 to 118 (LGRL…LTLR), 142 to 162 (IITV…AIDD), 177 to 197 (FVGF…IGPM), 204 to 224 (LFYI…PIHS), and 230 to 250 (FPFL…RIVF). A Ferric oxidoreductase domain is found at 101–219 (LGRLSYALIP…NLVNVAFILL (119 aa)). An FAD-binding FR-type domain is found at 250-388 (FAKSLMILNK…GGSGISFALP (139 aa)). Positions 480–507 (ISNFNSENADSNDKTPETSHSPTKENGS) are disordered.

The protein belongs to the ferric reductase (FRE) family. AIM14 subfamily. In terms of assembly, interacts with ribosomes.

The protein resides in the membrane. In terms of biological role, probable cell surface metalloreductase. May be involved in iron or copper homeostasis. The polypeptide is Probable metalloreductase AIM14 (AIM14) (Saccharomyces cerevisiae (strain JAY291) (Baker's yeast)).